A 304-amino-acid chain; its full sequence is Glycine--tRNA ligase alpha subunit (304 aa).

Belongs to the class-II aminoacyl-tRNA synthetase family. Tetramer of two alpha and two beta subunits.

Its subcellular location is the cytoplasm. It carries out the reaction tRNA(Gly) + glycine + ATP = glycyl-tRNA(Gly) + AMP + diphosphate. The chain is Glycine--tRNA ligase alpha subunit from Yersinia pseudotuberculosis serotype O:1b (strain IP 31758).